The sequence spans 706 residues: Centrosomal protein kizuna (706 aa).

Residues 63-113 (QRAKTRNLELLGNVENLASKLKEFSIDCSRLLQKRMEYKNHITRLKKDRRK) adopt a coiled-coil conformation. A compositionally biased stretch (basic residues) spans 105–116 (TRLKKDRRKMGS). Disordered stretches follow at residues 105 to 184 (TRLK…LCMH), 215 to 347 (VREK…ASRG), 571 to 603 (EIKP…QSPV), 620 to 665 (SVAQ…KTKP), and 677 to 706 (ESDD…DFYD). The span at 118 to 127 (GKSEADEHPS) shows a compositional bias: basic and acidic residues. Polar residues-rich tracts occupy residues 128-156 (RLST…NDGA) and 164-180 (HTEQ…SQSG). Over residues 215–251 (VREKQMESDWDISQRAREQQRQEELKSPHTTLKEAEV) the composition is skewed to basic and acidic residues. The span at 272 to 283 (TRSPSPDTTDPS) shows a compositional bias: low complexity. Residues 293–304 (GEDEEESAEDKD) show a composition bias toward acidic residues. The segment covering 308-320 (PINQNHSDYTSNI) has biased composition (polar residues). A compositionally biased stretch (acidic residues) spans 586–598 (EEQEIQSAEEDSA). Residues 638 to 648 (PDAHKLEKPEV) are compositionally biased toward basic and acidic residues.

This sequence belongs to the kizuna family.

It localises to the cytoplasm. The protein resides in the cytoskeleton. Its subcellular location is the microtubule organizing center. The protein localises to the centrosome. It is found in the cilium basal body. Centrosomal protein required for establishing a robust mitotic centrosome architecture that can endure the forces that converge on the centrosomes during spindle formation. Required for stabilizing the expanded pericentriolar material around the centriole. This Danio rerio (Zebrafish) protein is Centrosomal protein kizuna (kiz).